The primary structure comprises 503 residues: MSEQNHPQTEPQLDENQIIALRREKLHNIRQQRNAYPNDFKRDSFAADLHAQYGEIGKEELDPQGIPVKVAGRMMLKRQMGKASFATIQDVSGQIQLYLNNKGVSQEVLDDFNHWDLGDIVGAEGTLFKTNHGELTVRVSGIRLLSKSLRPLPDKHKGLSDQETKYRQRYVDLIANEESRNTFIKRSQIIQSVRNFMVGEHYLEVETPMMHPIPGGATAKPFVTHHNALDIPLYLRIAPELYLKRLVVGGLERVFEINRSFRNEGMSVRHNPEFTMIEFYEAFSDYERMMQMAEDIIRNASHTVNGTANITYNGKEVDLESPFERLTILEAIKKYNPHYTDEQLNDAEWLKKEIVKHGESLPPSPGIGSLQLALFEGCAEGKLWNPTFIVDYPVEVSPLARASDTKQGLTERFELFVVGRELANGYSELNDPEDQAERFKAQVAQKDAGDDEAMHYDADYIRAMEFGLPPTGGCGIGIDRLVMLLTDSQTIRDVILFPQMRPE.

Mg(2+)-binding residues include E414 and E421.

Belongs to the class-II aminoacyl-tRNA synthetase family. Homodimer. Requires Mg(2+) as cofactor.

The protein localises to the cytoplasm. The enzyme catalyses tRNA(Lys) + L-lysine + ATP = L-lysyl-tRNA(Lys) + AMP + diphosphate. This chain is Lysine--tRNA ligase, found in Neisseria meningitidis serogroup A / serotype 4A (strain DSM 15465 / Z2491).